Here is a 330-residue protein sequence, read N- to C-terminus: Methionyl-tRNA formyltransferase (330 aa).

(6S)-5,6,7,8-tetrahydrofolate is bound at residue 112–115 (SLLP).

Belongs to the Fmt family.

It carries out the reaction L-methionyl-tRNA(fMet) + (6R)-10-formyltetrahydrofolate = N-formyl-L-methionyl-tRNA(fMet) + (6S)-5,6,7,8-tetrahydrofolate + H(+). Its function is as follows. Attaches a formyl group to the free amino group of methionyl-tRNA(fMet). The formyl group appears to play a dual role in the initiator identity of N-formylmethionyl-tRNA by promoting its recognition by IF2 and preventing the misappropriation of this tRNA by the elongation apparatus. The polypeptide is Methionyl-tRNA formyltransferase (Synechocystis sp. (strain ATCC 27184 / PCC 6803 / Kazusa)).